Consider the following 87-residue polypeptide: uncharacterized protein (87 aa).

A helical membrane pass occupies residues 29–49 (ILWMIIFVVIIAVIIYILISP).

The protein localises to the membrane. This is an uncharacterized protein from Methanocaldococcus jannaschii (strain ATCC 43067 / DSM 2661 / JAL-1 / JCM 10045 / NBRC 100440) (Methanococcus jannaschii).